Here is a 94-residue protein sequence, read N- to C-terminus: uncharacterized protein (94 aa).

This is an uncharacterized protein from Narcissus mosaic virus (NMV).